The following is an 876-amino-acid chain: Pre-mRNA-splicing factor ATP-dependent RNA helicase-like protein PRP2 (876 aa).

The segment at 1-111 (MSSITSETGK…KGLLGDSENE (111 aa)) is disordered. Ser2 is modified (N-acetylserine). Polar residues predominate over residues 61–70 (VFSNTNQGPE). In terms of domain architecture, Helicase ATP-binding spans 233-399 (LQEIKKNQVL…FDNCPIFNVP (167 aa)). 246–253 (GETGSGKT) contacts ATP. The DEAH box motif lies at 346 to 349 (DEAH). Residues 424 to 598 (TIFQIHTTQS…NTVLLLLSLG (175 aa)) form the Helicase C-terminal domain.

The protein belongs to the DEAD box helicase family. DEAH subfamily. In terms of assembly, interacts directly with pre-mRNA. According to PubMed:2251118, associated with spliceosomes prior to and throughout step 1 of the splicing reaction. According to PubMed:8943336, it leaves the spliceosome before reaction 1. Interacts with SPP2.

It localises to the nucleus. The catalysed reaction is ATP + H2O = ADP + phosphate + H(+). Functionally, involved in pre-mRNA splicing. Is required together with ATP and at least one other factor, for the first cleavage-ligation reaction. Functions as a molecular motor in the activation of the precatalytic spliceosome for the first transesterification reaction of pre-mRNA splicing by hydrolyzing ATP to cause the activation of the spliceosome without the occurrence of splicing. Capable of hydrolyzing nucleoside triphosphates in the presence of single-stranded RNAs such as poly(U). The protein is Pre-mRNA-splicing factor ATP-dependent RNA helicase-like protein PRP2 (PRP2) of Saccharomyces cerevisiae (strain ATCC 204508 / S288c) (Baker's yeast).